A 295-amino-acid chain; its full sequence is Cytidine deaminase (295 aa).

2 CMP/dCMP-type deaminase domains span residues 48 to 168 and 187 to 295; these read TDSE…FGPA and KETD…YVAA. 89–91 lines the substrate pocket; the sequence is NME. His-102 lines the Zn(2+) pocket. Residue Glu-104 is the Proton donor of the active site. The Zn(2+) site is built by Cys-129 and Cys-132.

The protein belongs to the cytidine and deoxycytidylate deaminase family. As to quaternary structure, homodimer. The cofactor is Zn(2+).

The enzyme catalyses cytidine + H2O + H(+) = uridine + NH4(+). It catalyses the reaction 2'-deoxycytidine + H2O + H(+) = 2'-deoxyuridine + NH4(+). In terms of biological role, this enzyme scavenges exogenous and endogenous cytidine and 2'-deoxycytidine for UMP synthesis. This is Cytidine deaminase from Photobacterium profundum (strain SS9).